The primary structure comprises 272 residues: MLTYPNIDPVAIHLGPLQVHWYGLMYLLAFLCAWGLASYRAKQRDGWTSDMVSDLVFYGALGVVLGGRIGYVLFYEFDKFLENPIWLFQVWTGGMSFHGGFLGVMIAMLFWCKKYQKTWFQTLDFVAPCVPTGLMFGRIGNFIGGELYGRAVTDPNYPFGMIFPTDPLHLVRHPSQIYQALCEGLLLFIILWWFSSKPRPRMAVSALFLMGYGVARFVMEFFRQPDADQGFILFGWMTKGQILTVPMLLIGLWMMWYAYQKKIYDWGPQKNS.

The next 7 membrane-spanning stretches (helical) occupy residues 17–37, 55–75, 90–110, 125–145, 174–194, 202–222, and 230–250; these read LQVHWYGLMYLLAFLCAWGLA, LVFYGALGVVLGGRIGYVLFY, VWTGGMSFHGGFLGVMIAMLF, FVAPCVPTGLMFGRIGNFIGG, PSQIYQALCEGLLLFIILWWF, MAVSALFLMGYGVARFVMEFF, and GFILFGWMTKGQILTVPMLLI. Residue Arg-138 coordinates a 1,2-diacyl-sn-glycero-3-phospho-(1'-sn-glycerol).

The protein belongs to the Lgt family.

The protein resides in the cell inner membrane. It catalyses the reaction L-cysteinyl-[prolipoprotein] + a 1,2-diacyl-sn-glycero-3-phospho-(1'-sn-glycerol) = an S-1,2-diacyl-sn-glyceryl-L-cysteinyl-[prolipoprotein] + sn-glycerol 1-phosphate + H(+). It participates in protein modification; lipoprotein biosynthesis (diacylglyceryl transfer). In terms of biological role, catalyzes the transfer of the diacylglyceryl group from phosphatidylglycerol to the sulfhydryl group of the N-terminal cysteine of a prolipoprotein, the first step in the formation of mature lipoproteins. This is Phosphatidylglycerol--prolipoprotein diacylglyceryl transferase from Acinetobacter baumannii (strain AB307-0294).